Reading from the N-terminus, the 719-residue chain is Fusicoccadiene synthase (719 aa).

The fusicocca-2,10(14)-diene synthase stretch occupies residues 1-334 (MEFKYSEVVE…RYNPDVSFNK (334 aa)). Residues D92 and D96 each coordinate Mg(2+). The segment at 335 to 719 (TQLEWMRQGL…MRLLLELLRV (385 aa)) is geranylgeranyl diphosphate synthase. The tract at residues 358-404 (EIDSDESAVSPTADESDSTEDSLGSGSRQDSSLSTGLSLSPVHSNEG) is disordered. Residues 378-400 (DSLGSGSRQDSSLSTGLSLSPVH) show a composition bias toward polar residues. 3 residues coordinate isopentenyl diphosphate: K435, R438, and H467. Positions 474 and 478 each coordinate Mg(2+). Residue R483 participates in dimethylallyl diphosphate binding. R484 is an isopentenyl diphosphate binding site. Residues K561, T562, Q602, N609, K619, and K629 each coordinate dimethylallyl diphosphate.

In the N-terminal section; belongs to the terpene synthase family. The protein in the C-terminal section; belongs to the FPP/GGPP synthase family. As to quaternary structure, hexamer.

The enzyme catalyses geranylgeranyl diphosphate = fusicocca-2,10(14)-diene + diphosphate. The catalysed reaction is isopentenyl diphosphate + (2E,6E)-farnesyl diphosphate = (2E,6E,10E)-geranylgeranyl diphosphate + diphosphate. It participates in mycotoxin biosynthesis. Functionally, multifunctional diterpene synthase; part of the 2 gene clusters that mediate the biosynthesis of fusicoccins, diterpene glucosides that display phytohormone-like activity and function as potent activators of plasma membrane H(+)-ATPases in plants by modifying 14-3-3 proteins and cause the plant disease constriction canker. The first step in the pathway is performed by the fusicoccadiene synthase PaFS that possesses both prenyl transferase and terpene cyclase activity, converting isopentenyl diphosphate and dimethylallyl diphosphate into geranylgeranyl diphosphate (GGDP) and successively converting GGDP into fusicocca-2,10(14)-diene, a precursor for fusicoccin H. Fusicoccadiene synthase is an allosteric enzyme for GGPP cyclization that generates 64% fusicoccadiene, 9% delta-araneosene, and one additional unidentified diterpene product, when incubated with GGPP. In the absence of isopentenyl diphosphate (IPP), PaFS can also solvolyze the shorter chain geranyl diphosphate (GPP) and farnesyl diphosphate (FPP) as alternative substrates to yield predominantly acyclic products. FPP is converted to farnesol (60.5%), nerolidol (14.0%), and farnesene (14.0%), while GPP is converted to a mixture of geraniol (59.5%) and linalool (35.0%). The second step is the oxidation at the C-8 position by the cytochrome P450 monooxygenase PaP450-2 to yield fusicocca-2,10(14)-diene-8-beta-ol. The cytochrome P450 monooxygenase PaP450-1 then catalyzes the hydroxylation at the C-16 position to produce fusicocca-2,10(14)-diene-8-beta,16-diol. The dioxygenase fc-dox then catalyzes the 16-oxydation of fusicocca-2,10(14)-diene-8-beta,16-diol to yield an aldehyde (8-beta-hydroxyfusicocca-1,10(14)-dien-16-al). The short-chain dehydrogenase/reductase fc-sdr catalyzes the reduction of the aldehyde to yield fusicocca-1,10(14)-diene-8-beta,16-diol. The next step is the hydroxylation at C-9 performed by the cytochrome P450 monooxygenase PaP450-3 that leads to fusicoccin H aglycon which is glycosylated to fusicoccin H by the O-glycosyltransferase PAGT. Hydroxylation at C-12 by the cytochrome P450 monooxygenase PaP450-4 leads then to the production of fusicoccin Q and is followed by methylation by the O-methyltransferase PAMT to yield fusicoccin P. Fusicoccin P is further converted to fusicoccin J via prenylation by the O-glucose prenyltransferase PaPT. Cytochrome P450 monooxygenase PaP450-5 then performs hydroxylation at C-19 to yield dideacetyl-fusicoccin A which is acetylated to 3'-O-deacetyl-fusicoccin A by the O-acetyltransferase PaAT-2. Finally, a another acetylation by the O-acetyltransferase PaAT-1 yields fusicoccin A. This is Fusicoccadiene synthase from Phomopsis amygdali (Fusicoccum amygdali).